The primary structure comprises 348 residues: NFSTPLSEYEEVSYESAGYTVLQILPLVVLGVTFVLGVLGNGLVIWVAGFRMTRTVTTICYLNLALADFSFTATLPFLIVSMAMGEKWPFGWFLCKLIHIVVDINLFGSVFLIGFIALDRCICVLHPVWAQNHRTVSLAMKVIVGPWILALVLTLPVFLFLTTVTIPNGDTYCTFNFASWGGTPEKRLKVAITMLTARGIIRFVIGFSMPMSIVATCYGLIAAKIHKKGMIKSSRPLRVLTAVVASFFICWFPFQLVALLSTVWLKEILVDGKYKIINILVNPTSSLAFFNSCLNPMLYVFVGQDFRERLIHSLPTSLERALSEDSAPTNDTAASCASPPAETELQAM.

An N-linked (GlcNAc...) asparagine glycan is attached at Asn-1. The Extracellular segment spans residues 1–24 (NFSTPLSEYEEVSYESAGYTVLQI). A helical membrane pass occupies residues 25-47 (LPLVVLGVTFVLGVLGNGLVIWV). The Cytoplasmic segment spans residues 48 to 58 (AGFRMTRTVTT). Residues 59–80 (ICYLNLALADFSFTATLPFLIV) form a helical membrane-spanning segment. The Extracellular segment spans residues 81–97 (SMAMGEKWPFGWFLCKL). Cys-95 and Cys-173 are oxidised to a cystine. Residues 98 to 118 (IHIVVDINLFGSVFLIGFIAL) form a helical membrane-spanning segment. Residues 119-137 (DRCICVLHPVWAQNHRTVS) lie on the Cytoplasmic side of the membrane. The chain crosses the membrane as a helical span at residues 138–159 (LAMKVIVGPWILALVLTLPVFL). The Extracellular segment spans residues 160 to 202 (FLTTVTIPNGDTYCTFNFASWGGTPEKRLKVAITMLTARGIIR). A helical transmembrane segment spans residues 203-223 (FVIGFSMPMSIVATCYGLIAA). Residues 224-239 (KIHKKGMIKSSRPLRV) lie on the Cytoplasmic side of the membrane. The helical transmembrane segment at 240-263 (LTAVVASFFICWFPFQLVALLSTV) threads the bilayer. Residues 264–283 (WLKEILVDGKYKIINILVNP) are Extracellular-facing. A helical membrane pass occupies residues 284-303 (TSSLAFFNSCLNPMLYVFVG). Residues 304–348 (QDFRERLIHSLPTSLERALSEDSAPTNDTAASCASPPAETELQAM) lie on the Cytoplasmic side of the membrane. The disordered stretch occupies residues 322 to 348 (LSEDSAPTNDTAASCASPPAETELQAM). The span at 326-335 (SAPTNDTAAS) shows a compositional bias: polar residues.

This sequence belongs to the G-protein coupled receptor 1 family. In terms of assembly, interacts with APP; the interaction takes place at the cell surface and the complex is then rapidly internalized.

The protein localises to the cell membrane. In terms of biological role, low affinity receptor for N-formyl-methionyl peptides, which are powerful neutrophil chemotactic factors. Binding of FMLP to the receptor causes activation of neutrophils. This response is mediated via a G-protein that activates a phosphatidylinositol-calcium second messenger system. Receptor for the chemokine-like protein FAM19A5, mediating FAM19A5-stimulated macrophage chemotaxis and the inhibitory effect on TNFSF11/RANKL-induced osteoclast differentiation. This is N-formyl peptide receptor 2 (FPR2) from Macaca mulatta (Rhesus macaque).